A 478-amino-acid chain; its full sequence is Cytochrome c-552 (478 aa).

Positions 1–26 are cleaved as a signal peptide; it reads MTRIKINARRIFSLLIPFFFFTSVHA. A heme c-binding site is contributed by His94. Heme is bound by residues Cys122, Cys125, and Lys126. Heme c-binding residues include Cys160, Cys163, His164, Cys209, Cys212, and His213. Residues Glu215, Tyr216, Lys261, and Gln263 each contribute to the Ca(2+) site. A substrate-binding site is contributed by Tyr216. Position 264 (His264) interacts with substrate. Heme c-binding residues include His275, Cys282, Cys285, His286, His301, Cys314, Cys317, His318, and His393.

This sequence belongs to the cytochrome c-552 family. The cofactor is Ca(2+). Requires heme c as cofactor.

It is found in the periplasm. It carries out the reaction 6 Fe(III)-[cytochrome c] + NH4(+) + 2 H2O = 6 Fe(II)-[cytochrome c] + nitrite + 8 H(+). It participates in nitrogen metabolism; nitrate reduction (assimilation). Its function is as follows. Catalyzes the reduction of nitrite to ammonia, consuming six electrons in the process. The polypeptide is Cytochrome c-552 (Escherichia coli O9:H4 (strain HS)).